Here is a 225-residue protein sequence, read N- to C-terminus: Probable septum site-determining protein MinC (225 aa).

The protein belongs to the MinC family. In terms of assembly, interacts with MinD and FtsZ.

Functionally, cell division inhibitor that blocks the formation of polar Z ring septums. Rapidly oscillates between the poles of the cell to destabilize FtsZ filaments that have formed before they mature into polar Z rings. Prevents FtsZ polymerization. The sequence is that of Probable septum site-determining protein MinC from Listeria monocytogenes serotype 4a (strain HCC23).